The sequence spans 299 residues: Maintenance of mitochondrial morphology protein 1 (299 aa).

The Lumenal portion of the chain corresponds to 1 to 15 (MTNIIFSLQPTFTQG). A helical membrane pass occupies residues 16–36 (LILGQLSVLVLLGLILKYLFL). The Cytoplasmic segment spans residues 37–299 (DSTKNPFETT…QEESKRQEEA (263 aa)). The disordered stretch occupies residues 47 to 68 (SYHPQFDRKPARKQQAQDSQSQ). Residues 73 to 281 (DVESLDWFNL…LPGLASVAEA (209 aa)) form the SMP-LTD domain.

It belongs to the MMM1 family. As to quaternary structure, homodimer. Component of the ER-mitochondria encounter structure (ERMES) or MDM complex, composed of MMM1, MDM10, MDM12 and MDM34. An MMM1 homodimer associates with one molecule of MDM12 on each side in a pairwise head-to-tail manner, and the SMP-LTD domains of MMM1 and MDM12 generate a continuous hydrophobic tunnel for phospholipid trafficking.

Its subcellular location is the endoplasmic reticulum membrane. Component of the ERMES/MDM complex, which serves as a molecular tether to connect the endoplasmic reticulum (ER) and mitochondria. Components of this complex are involved in the control of mitochondrial shape and protein biogenesis, and function in nonvesicular lipid trafficking between the ER and mitochondria. The MDM12-MMM1 subcomplex functions in the major beta-barrel assembly pathway that is responsible for biogenesis of all outer membrane beta-barrel proteins, and acts in a late step after the SAM complex. The MDM10-MDM12-MMM1 subcomplex further acts in the TOM40-specific pathway after the action of the MDM12-MMM1 complex. Essential for establishing and maintaining the structure of mitochondria and maintenance of mtDNA nucleoids. The sequence is that of Maintenance of mitochondrial morphology protein 1 from Coprinopsis cinerea (strain Okayama-7 / 130 / ATCC MYA-4618 / FGSC 9003) (Inky cap fungus).